Here is a 370-residue protein sequence, read N- to C-terminus: Probable phosphoserine aminotransferase (370 aa).

Residue arginine 45 participates in L-glutamate binding. Residues 79 to 80 (GT), tryptophan 105, threonine 154, aspartate 175, and glutamine 198 each bind pyridoxal 5'-phosphate. Lysine 199 carries the N6-(pyridoxal phosphate)lysine modification. Residue 240 to 241 (NT) coordinates pyridoxal 5'-phosphate.

It belongs to the class-V pyridoxal-phosphate-dependent aminotransferase family. SerC subfamily. Homodimer. Pyridoxal 5'-phosphate is required as a cofactor.

The enzyme catalyses O-phospho-L-serine + 2-oxoglutarate = 3-phosphooxypyruvate + L-glutamate. It carries out the reaction 4-(phosphooxy)-L-threonine + 2-oxoglutarate = (R)-3-hydroxy-2-oxo-4-phosphooxybutanoate + L-glutamate. It functions in the pathway amino-acid biosynthesis; L-serine biosynthesis; L-serine from 3-phospho-D-glycerate: step 2/3. Its pathway is cofactor biosynthesis; pyridoxine 5'-phosphate biosynthesis; pyridoxine 5'-phosphate from D-erythrose 4-phosphate: step 3/5. Catalyzes the reversible conversion of 3-phosphohydroxypyruvate to phosphoserine and of 3-hydroxy-2-oxo-4-phosphonooxybutanoate to phosphohydroxythreonine. This Caenorhabditis elegans protein is Probable phosphoserine aminotransferase.